The chain runs to 213 residues: MAAFTGTTDKCKACDKTVYVMDLMTLEGMPYHKSCFRCSHCNGTLVICNYSSMDGVLYCKTHFEQLFKESGNFSKNFQTAGKTEKSNDATKAPNRLSSFFSGTQDKCAACKKTVYPLEKMTMEGESYHKTCFRCAHSGCPLTHSSYAALDGVLYCKVHFSQLFLEKGNYNHVLQAAANHRRSTAEEDKTEPKEDEANPTEEETSDAAAEEHES.

LIM zinc-binding domains follow at residues Asp9–Glu69 and Asp105–Glu165. A disordered region spans residues Ala177–Ser213. The segment covering Ser182 to Glu195 has biased composition (basic and acidic residues).

Interacts with F-actin. In terms of tissue distribution, exclusively expressed in pollen grains.

The protein localises to the cytoplasm. Its subcellular location is the cytoskeleton. In terms of biological role, binds to actin filaments and promotes cross-linking into thick bundles. Has an actin-stabilizing activity. Associates predominantly with long and dynamic actin bundles in the shank of growing pollen tubes. The actin regulatory activities are inhibited by pH &gt; 6.8 and/or high [Ca(2+)]. The sequence is that of LIM domain-containing protein PLIM2c from Arabidopsis thaliana (Mouse-ear cress).